Reading from the N-terminus, the 406-residue chain is MEIKTSRIVILILVVVIPAILIFRNPINLGLDLRGGTSVVLEAQEEDGKKLQPDTMDKVREIVQRRVDGLGVSEPVIQKSGENRLIVELAGVKDAQEAIDLIGTTAKLEFKIKTGDNSYGPTVLDGSAIKNAYVQQDQFGKPMIGFELNDEGAVKFAEITRTNMGKQLAIMLDGKEQSAPVIQSEIPGGKGSISGSFTYESAQNLANLLKAGALPVNIQIMETRSVDASLGAESIKATKMAAMIALVLVSLFMLAVYRVAGFVADLALCVFGILTAGLMCAIGTTLTLPGIAGFILSLGMAVDANVIIFERIKDEIMEGKRFQDCIDDGFNRAFPAILDGNITTLLITMVLFFFGTGPVRGFAVILTIGVLVSMFTAIFITKIIVKIFVNIFHLNGEKLFGLKGVE.

Transmembrane regions (helical) follow at residues 8–28 (IVIL…NPIN), 240–260 (MAAM…YRVA), 262–282 (FVAD…MCAI), 289–309 (PGIA…VIIF), 334–354 (FPAI…LFFF), and 361–381 (GFAV…IFIT).

It belongs to the SecD/SecF family. SecD subfamily. As to quaternary structure, forms a complex with SecF. Part of the essential Sec protein translocation apparatus which comprises SecA, SecYEG and auxiliary proteins SecDF. Other proteins may also be involved.

The protein resides in the cell inner membrane. Its function is as follows. Part of the Sec protein translocase complex. Interacts with the SecYEG preprotein conducting channel. SecDF uses the proton motive force (PMF) to complete protein translocation after the ATP-dependent function of SecA. This is Protein translocase subunit SecD from Sebaldella termitidis (strain ATCC 33386 / NCTC 11300).